Consider the following 1255-residue polypeptide: Receptor tyrosine-protein kinase erbB-2 (1255 aa).

The N-terminal stretch at 1–22 is a signal peptide; sequence MELAALCRWGLLLALLPPGAAS. Over 23–652 the chain is Extracellular; the sequence is TQVCTGTDMK…PAEQRASPLT (630 aa). Cysteines 26 and 53 form a disulfide. N-linked (GlcNAc...) asparagine glycans are attached at residues asparagine 68 and asparagine 124. Disulfide bonds link cysteine 162/cysteine 192, cysteine 195/cysteine 204, cysteine 199/cysteine 212, cysteine 220/cysteine 227, cysteine 224/cysteine 235, cysteine 236/cysteine 244, cysteine 240/cysteine 252, cysteine 255/cysteine 264, cysteine 268/cysteine 295, cysteine 299/cysteine 311, cysteine 315/cysteine 331, cysteine 334/cysteine 338, cysteine 342/cysteine 367, cysteine 475/cysteine 504, cysteine 511/cysteine 520, and cysteine 515/cysteine 528. Position 182 is a phosphothreonine (threonine 182). A glycan (N-linked (GlcNAc...) asparagine) is linked at asparagine 187. An N-linked (GlcNAc...) asparagine glycan is attached at asparagine 259. A glycan (N-linked (GlcNAc...) asparagine) is linked at asparagine 530. Disulfide bonds link cysteine 531-cysteine 540, cysteine 544-cysteine 560, cysteine 563-cysteine 576, cysteine 567-cysteine 584, cysteine 587-cysteine 596, cysteine 600-cysteine 623, cysteine 626-cysteine 634, and cysteine 630-cysteine 642. A glycan (N-linked (GlcNAc...) asparagine) is linked at asparagine 571. Asparagine 629 carries an N-linked (GlcNAc...) asparagine glycan. A helical transmembrane segment spans residues 653-675; that stretch reads SIISAVVGILLVVVLGVVFGILI. Residues 676-689 form a required for interaction with KPNB1 and EEA1 region; it reads KRRQQKIRKYTMRR. The short motif at 676-689 is the Nuclear localization signal element; sequence KRRQQKIRKYTMRR. Topologically, residues 676-1255 are cytoplasmic; the sequence is KRRQQKIRKY…PEYLGLDVPV (580 aa). Residues 720-987 form the Protein kinase domain; it reads LRKVKVLGSG…RMARDPQRFV (268 aa). Residues 726–734 and lysine 753 contribute to the ATP site; that span reads LGSGAFGTV. The Proton acceptor role is filled by aspartate 845. The residue at position 877 (tyrosine 877) is a Phosphotyrosine. 2 disordered regions span residues 1035-1179 and 1196-1255; these read PAPG…GKNG and YLTP…DVPV. Residues serine 1054, serine 1078, serine 1083, and serine 1107 each carry the phosphoserine modification. Phosphotyrosine is present on residues tyrosine 1112 and tyrosine 1139. Residues 1146 to 1155 are compositionally biased toward pro residues; the sequence is RPQPPSPREG. Phosphoserine is present on serine 1151. Threonine 1166 is subject to Phosphothreonine. Residues 1195–1197 are interaction with PIK3C2B; the sequence is EYL. Position 1196 is a phosphotyrosine (tyrosine 1196). Position 1248 is a phosphotyrosine; by autocatalysis (tyrosine 1248).

The protein belongs to the protein kinase superfamily. Tyr protein kinase family. EGF receptor subfamily. In terms of assembly, homodimer. Heterodimer with EGFR, ERBB3 and ERBB4. Part of a complex with EGFR and either PIK3C2A or PIK3C2B. May interact with PIK3C2B when phosphorylated on Tyr-1196. Interacts with PLXNB1. Interacts (when phosphorylated on Tyr-1248) with MEMO1. Interacts with MUC1; the interaction is enhanced by heregulin (HRG). Interacts (when phosphorylated on Tyr-1139) with GRB7 (via SH2 domain). Interacts (when phosphorylated on Tyr-1248) with ERBIN. Interacts with KPNB1, RANBP2, EEA1, CRM1 and CLTC. Interacts with PTK6. Interacts with RPA194 and ACTB. Interacts with PRKCABP, SRC and MYOC. Interacts (preferentially with the tyrosine phosphorylated form) with CPNE3; this interaction occurs at the cell membrane and is increased in a growth factor heregulin-dependent manner. Interacts with HSP90AA1 and HSP90AB1 in an ATP-dependent manner; the interaction suppresses ERBB2 kinase activity. Interacts with SORL1; this interaction regulates ERBB2 subcellular distribution by promoting its recycling after internalization from endosomes back to the plasma membrane, hence stimulates ERBB2-mediated signaling. Interacts with SH3BGRL. Interacts with ROR1. Post-translationally, autophosphorylated. Autophosphorylation occurs in trans, i.e. one subunit of the dimeric receptor phosphorylates tyrosine residues on the other subunit. Ligand-binding increases phosphorylation on tyrosine residues. Signaling via SEMA4C promotes phosphorylation at Tyr-1248. Dephosphorylated by PTPN12. As to expression, expressed in a variety of tumor tissues including primary breast tumors and tumors from small bowel, esophagus, kidney and mouth.

It is found in the cell membrane. The protein localises to the cell projection. Its subcellular location is the ruffle membrane. The protein resides in the early endosome. It localises to the cytoplasm. It is found in the perinuclear region. The protein localises to the nucleus. It carries out the reaction L-tyrosyl-[protein] + ATP = O-phospho-L-tyrosyl-[protein] + ADP + H(+). Its activity is regulated as follows. Activated by dimerization. Not activated by EGF, TGF-alpha and amphiregulin. Interaction with PTK6 increases its intrinsic kinase activity. In terms of biological role, protein tyrosine kinase that is part of several cell surface receptor complexes, but that apparently needs a coreceptor for ligand binding. Essential component of a neuregulin-receptor complex, although neuregulins do not interact with it alone. GP30 is a potential ligand for this receptor. Regulates outgrowth and stabilization of peripheral microtubules (MTs). Upon ERBB2 activation, the MEMO1-RHOA-DIAPH1 signaling pathway elicits the phosphorylation and thus the inhibition of GSK3B at cell membrane. This prevents the phosphorylation of APC and CLASP2, allowing its association with the cell membrane. In turn, membrane-bound APC allows the localization of MACF1 to the cell membrane, which is required for microtubule capture and stabilization. In the nucleus is involved in transcriptional regulation. Associates with the 5'-TCAAATTC-3' sequence in the PTGS2/COX-2 promoter and activates its transcription. Implicated in transcriptional activation of CDKN1A; the function involves STAT3 and SRC. Involved in the transcription of rRNA genes by RNA Pol I and enhances protein synthesis and cell growth. The chain is Receptor tyrosine-protein kinase erbB-2 (ERBB2) from Homo sapiens (Human).